We begin with the raw amino-acid sequence, 83 residues long: Glutaredoxin 3 (83 aa).

Positions 2 to 83 (ANVEIYTKET…ARGGLDPLLK (82 aa)) constitute a Glutaredoxin domain. A disulfide bond links Cys12 and Cys15.

The protein belongs to the glutaredoxin family. Monomer.

In terms of biological role, the disulfide bond functions as an electron carrier in the glutathione-dependent synthesis of deoxyribonucleotides by the enzyme ribonucleotide reductase. In addition, it is also involved in reducing some disulfides in a coupled system with glutathione reductase. In Escherichia coli O157:H7, this protein is Glutaredoxin 3 (grxC).